We begin with the raw amino-acid sequence, 337 residues long: Diacylglycerol O-acyltransferase 2-like protein 6 (337 aa).

A run of 2 helical transmembrane segments spans residues 22 to 42 (MPVY…FLVF) and 102 to 122 (YIIA…NFAT).

It belongs to the diacylglycerol acyltransferase family.

The protein localises to the endoplasmic reticulum membrane. The catalysed reaction is 1,2-di-(9Z-octadecenoyl)-sn-glycerol + (9Z)-octadecenoyl-CoA = 1,2,3-tri-(9Z-octadecenoyl)-glycerol + CoA. Functionally, diglyceride acyltransferase that uses fatty acyl-CoA as substrate. Particularly active with oleate as a substrate. Has no wax synthase activity to produce wax esters. The polypeptide is Diacylglycerol O-acyltransferase 2-like protein 6 (DGAT2L6) (Bos taurus (Bovine)).